The sequence spans 68 residues: Small ribosomal subunit protein bS21 (68 aa).

The protein belongs to the bacterial ribosomal protein bS21 family.

The sequence is that of Small ribosomal subunit protein bS21 from Endomicrobium trichonymphae.